The sequence spans 267 residues: 4-hydroxy-tetrahydrodipicolinate reductase (267 aa).

Residues 8 to 13 and E34 each bind NAD(+); that span reads GAGGRM. R35 contacts NADP(+). NAD(+) contacts are provided by residues 98-100 and 122-125; these read GTT and APNM. The active-site Proton donor/acceptor is H155. H156 is a binding site for (S)-2,3,4,5-tetrahydrodipicolinate. K159 serves as the catalytic Proton donor. 165–166 is a (S)-2,3,4,5-tetrahydrodipicolinate binding site; that stretch reads GT.

This sequence belongs to the DapB family.

The protein resides in the cytoplasm. The catalysed reaction is (S)-2,3,4,5-tetrahydrodipicolinate + NAD(+) + H2O = (2S,4S)-4-hydroxy-2,3,4,5-tetrahydrodipicolinate + NADH + H(+). The enzyme catalyses (S)-2,3,4,5-tetrahydrodipicolinate + NADP(+) + H2O = (2S,4S)-4-hydroxy-2,3,4,5-tetrahydrodipicolinate + NADPH + H(+). It functions in the pathway amino-acid biosynthesis; L-lysine biosynthesis via DAP pathway; (S)-tetrahydrodipicolinate from L-aspartate: step 4/4. Catalyzes the conversion of 4-hydroxy-tetrahydrodipicolinate (HTPA) to tetrahydrodipicolinate. The chain is 4-hydroxy-tetrahydrodipicolinate reductase from Thioalkalivibrio sulfidiphilus (strain HL-EbGR7).